The following is a 718-amino-acid chain: Polyribonucleotide nucleotidyltransferase (718 aa).

Residues aspartate 487 and aspartate 493 each coordinate Mg(2+). A KH domain is found at 554–613 (PRIETFKIPTDKIREVIGTGGKVIREIVEKTGAKVNIEDDGTVKVASSDGESIKAAIKWI). The 69-residue stretch at 623–691 (GEIYEGTVVK…DRGKTRLSMR (69 aa)) folds into the S1 motif domain. The segment at 694-718 (DQETGEDLEAKQKAEGEAPAQATGE) is disordered.

It belongs to the polyribonucleotide nucleotidyltransferase family. It depends on Mg(2+) as a cofactor.

It is found in the cytoplasm. It catalyses the reaction RNA(n+1) + phosphate = RNA(n) + a ribonucleoside 5'-diphosphate. In terms of biological role, involved in mRNA degradation. Catalyzes the phosphorolysis of single-stranded polyribonucleotides processively in the 3'- to 5'-direction. In Rhodopseudomonas palustris (strain HaA2), this protein is Polyribonucleotide nucleotidyltransferase.